The chain runs to 349 residues: SUMO-activating enzyme subunit 1 (349 aa).

Met-1 carries the post-translational modification N-acetylmethionine. Position 2 is an N-acetylvaline; in SUMO-activating enzyme subunit 1, N-terminally processed (Val-2). Ser-15 carries the phosphoserine modification. Lys-201 bears the N6-acetyllysine mark.

Belongs to the ubiquitin-activating E1 family. As to quaternary structure, heterodimer of SAE1 and UBA2/SAE2. The heterodimer corresponds to the two domains that are encoded on a single polypeptide chain in ubiquitin-activating enzyme E1. Interacts with UBE2I.

The protein localises to the nucleus. It participates in protein modification; protein sumoylation. In terms of biological role, the heterodimer acts as an E1 ligase for SUMO1, SUMO2, SUMO3, and probably SUMO4. It mediates ATP-dependent activation of SUMO proteins followed by formation of a thioester bond between a SUMO protein and a conserved active site cysteine residue on UBA2/SAE2. This chain is SUMO-activating enzyme subunit 1 (Sae1), found in Rattus norvegicus (Rat).